A 111-amino-acid chain; its full sequence is Photosystem II reaction center Psb28 protein (111 aa).

It belongs to the Psb28 family. Part of the photosystem II complex.

The protein localises to the cellular thylakoid membrane. This Acaryochloris marina (strain MBIC 11017) protein is Photosystem II reaction center Psb28 protein.